The chain runs to 800 residues: Nuclear cap-binding protein subunit 1 (800 aa).

Residues 1–26 (MSRRRAHDTEDEGYDHRRNKRRRVSE) are disordered. T9 carries the post-translational modification Phosphothreonine. The region spanning 31–243 (EDRLESLILR…CLWAQIRKLR (213 aa)) is the MIF4G domain. The interval 669–704 (LSKADSSSSESDEDAPTKRKKPITHADKPSEEAVER) is disordered. Positions 692–704 (THADKPSEEAVER) are enriched in basic and acidic residues.

The protein belongs to the NCBP1 family. In terms of assembly, component of the nuclear cap-binding complex (CBC), a heterodimer composed of Cbp80 and Cbp20 that interacts with m7GpppG-capped RNA.

It localises to the nucleus. In terms of biological role, component of the cap-binding complex (CBC), which binds cotranscriptionally to the 5'-cap of pre-mRNAs and is involved in various processes such as pre-mRNA splicing and RNA-mediated gene silencing (RNAi). The CBC complex is involved in miRNA-mediated RNA interference via its interaction with Ars2 and is required for primary microRNAs (miRNAs) processing. Also involved in innate immunity via the short interfering RNAs (siRNAs) processing machinery by restricting the viral RNA production. In the CBC complex, Cbp80 does not bind directly capped RNAs (m7GpppG-capped RNA) but is required to stabilize the movement of the N-terminal loop of Cbp20 and lock the CBC into a high affinity cap-binding state with the cap structure. The polypeptide is Nuclear cap-binding protein subunit 1 (Cbp80) (Drosophila persimilis (Fruit fly)).